Reading from the N-terminus, the 387-residue chain is Sulfate adenylyltransferase (387 aa).

The protein belongs to the sulfate adenylyltransferase family.

The enzyme catalyses sulfate + ATP + H(+) = adenosine 5'-phosphosulfate + diphosphate. It functions in the pathway sulfur metabolism; hydrogen sulfide biosynthesis; sulfite from sulfate: step 1/3. The protein is Sulfate adenylyltransferase (sat) of Deinococcus radiodurans (strain ATCC 13939 / DSM 20539 / JCM 16871 / CCUG 27074 / LMG 4051 / NBRC 15346 / NCIMB 9279 / VKM B-1422 / R1).